Consider the following 143-residue polypeptide: MDFEKIRKWLEITNEYKQSDFWTNVLKYKAPEHFFDSEASTFVYDFYQDEEYNFIIVEMPGVYEEELTIRLLSKTQLLIKGTITPVFPAEMEVLRERYYGEIERIIQLPEAAETHLLQIQLLNGLLHISYPRQVETVAFNKGL.

Residues 34–143 (FFDSEASTFV…VETVAFNKGL (110 aa)) form the sHSP domain.

Belongs to the small heat shock protein (HSP20) family.

This chain is Spore coat protein P (cotP), found in Bacillus subtilis (strain 168).